A 63-amino-acid chain; its full sequence is Eumenitin VP1 (63 aa).

The N-terminal stretch at 1–22 is a signal peptide; sequence MRGTSFILFAVVVILGFLHANA. AXPX repeat units lie at residues 22–25, 26–29, 32–35, 40–43, and 44–47; these read AEPL, ANPA, ANPD, ADPL, and ADPE. Positions 23–48 are excised as a propeptide; the sequence is EPLANPAPLANPDPLANADPLADPEA.

Expressed by the venom gland.

It is found in the secreted. The protein resides in the target cell membrane. Antimicrobial peptide with activities against the fungi B.cinerea (MIC=5 uM) and C.albicans (MIC=100 uM), the Gram-negative bacterium E.coli (MIC=25 uM) and the Gram-positive bacterium S.aureus (MIC=100 uM). Shows cytolytic activity against insect cell lines. Has no hemolytic activity against human erythrocytes. In vivo, peptide injection in the vicinity of the head and thorax of lepidopteran larvae induces feeding disorder followed by death due to starvation. The sequence is that of Eumenitin VP1 from Eumenes pomiformis (Potter wasp).